The sequence spans 607 residues: DNA mismatch repair protein MutL (607 aa).

The protein belongs to the DNA mismatch repair MutL/HexB family.

Its function is as follows. This protein is involved in the repair of mismatches in DNA. It is required for dam-dependent methyl-directed DNA mismatch repair. May act as a 'molecular matchmaker', a protein that promotes the formation of a stable complex between two or more DNA-binding proteins in an ATP-dependent manner without itself being part of a final effector complex. This chain is DNA mismatch repair protein MutL, found in Anaeromyxobacter sp. (strain K).